The following is a 199-amino-acid chain: Probable molybdenum cofactor guanylyltransferase (199 aa).

Residues 6–8 (LAG), K18, D65, and D97 each bind GTP. D97 is a Mg(2+) binding site.

This sequence belongs to the MobA family. Mg(2+) serves as cofactor.

The protein localises to the cytoplasm. It carries out the reaction Mo-molybdopterin + GTP + H(+) = Mo-molybdopterin guanine dinucleotide + diphosphate. Functionally, transfers a GMP moiety from GTP to Mo-molybdopterin (Mo-MPT) cofactor (Moco or molybdenum cofactor) to form Mo-molybdopterin guanine dinucleotide (Mo-MGD) cofactor. This chain is Probable molybdenum cofactor guanylyltransferase, found in Staphylococcus aureus (strain Mu50 / ATCC 700699).